The chain runs to 147 residues: Acidic phospholipase A2 S3-24 (147 aa).

The N-terminal stretch at 1 to 19 is a signal peptide; sequence MYPAHLLVLLAVCVSLLGA. A propeptide spanning residues 20 to 27 is cleaved from the precursor; it reads SDMPPQPL. Disulfide bonds link Cys38–Cys99, Cys54–Cys146, Cys56–Cys72, Cys71–Cys127, Cys78–Cys120, Cys88–Cys113, and Cys106–Cys118. Residues Tyr55, Gly57, and Gly59 each contribute to the Ca(2+) site. His75 is an active-site residue. Asp76 provides a ligand contact to Ca(2+). The active site involves Asp121.

The protein belongs to the phospholipase A2 family. Group I subfamily. D49 sub-subfamily. Requires Ca(2+) as cofactor. Expressed by the venom gland.

The protein localises to the secreted. It catalyses the reaction a 1,2-diacyl-sn-glycero-3-phosphocholine + H2O = a 1-acyl-sn-glycero-3-phosphocholine + a fatty acid + H(+). Its function is as follows. Snake venom phospholipase A2 (PLA2) that inhibits collagen-induced platelet aggregation. PLA2 catalyzes the calcium-dependent hydrolysis of the 2-acyl groups in 3-sn-phosphoglycerides. This is Acidic phospholipase A2 S3-24 from Austrelaps superbus (Lowland copperhead snake).